Here is a 323-residue protein sequence, read N- to C-terminus: o-succinylbenzoate synthase (323 aa).

Residue lysine 134 is the Proton donor of the active site. 3 residues coordinate Mg(2+): aspartate 162, glutamate 191, and aspartate 214. Lysine 236 functions as the Proton acceptor in the catalytic mechanism.

The protein belongs to the mandelate racemase/muconate lactonizing enzyme family. MenC type 1 subfamily. Requires a divalent metal cation as cofactor.

The enzyme catalyses (1R,6R)-6-hydroxy-2-succinyl-cyclohexa-2,4-diene-1-carboxylate = 2-succinylbenzoate + H2O. It participates in quinol/quinone metabolism; 1,4-dihydroxy-2-naphthoate biosynthesis; 1,4-dihydroxy-2-naphthoate from chorismate: step 4/7. The protein operates within quinol/quinone metabolism; menaquinone biosynthesis. Its function is as follows. Converts 2-succinyl-6-hydroxy-2,4-cyclohexadiene-1-carboxylate (SHCHC) to 2-succinylbenzoate (OSB). The chain is o-succinylbenzoate synthase from Yersinia pseudotuberculosis serotype O:1b (strain IP 31758).